A 207-amino-acid polypeptide reads, in one-letter code: Glycerol-3-phosphate acyltransferase (207 aa).

5 helical membrane-spanning segments follow: residues 4 to 24 (VVAT…SFAV), 58 to 78 (ILTL…AQLL), 86 to 106 (DMGI…PVFH), 120 to 140 (ILLA…LIIA), and 162 to 182 (VLLF…VLLI).

It belongs to the PlsY family. As to quaternary structure, probably interacts with PlsX.

It localises to the cell inner membrane. The enzyme catalyses an acyl phosphate + sn-glycerol 3-phosphate = a 1-acyl-sn-glycero-3-phosphate + phosphate. It participates in lipid metabolism; phospholipid metabolism. Functionally, catalyzes the transfer of an acyl group from acyl-phosphate (acyl-PO(4)) to glycerol-3-phosphate (G3P) to form lysophosphatidic acid (LPA). This enzyme utilizes acyl-phosphate as fatty acyl donor, but not acyl-CoA or acyl-ACP. The chain is Glycerol-3-phosphate acyltransferase from Ralstonia nicotianae (strain ATCC BAA-1114 / GMI1000) (Ralstonia solanacearum).